The sequence spans 329 residues: Ribosomal protein L11 methyltransferase (329 aa).

S-adenosyl-L-methionine-binding residues include T177, G198, D220, and N264.

Belongs to the methyltransferase superfamily. PrmA family.

The protein resides in the cytoplasm. It carries out the reaction L-lysyl-[protein] + 3 S-adenosyl-L-methionine = N(6),N(6),N(6)-trimethyl-L-lysyl-[protein] + 3 S-adenosyl-L-homocysteine + 3 H(+). In terms of biological role, methylates ribosomal protein L11. The polypeptide is Ribosomal protein L11 methyltransferase (Helicobacter pylori (strain HPAG1)).